The sequence spans 494 residues: Glycosyl hydrolase family 109 protein (494 aa).

Residues 1–32 (MNDDARPAPEPQDIPPHSGAADEVNRQDPSRR) form a disordered region. The tat-type signal signal peptide spans 1-58 (MNDDARPAPEPQDIPPHSGAADEVNRQDPSRRSVLWTTAGVAGAGLGLGALGAGTASA). NAD(+) contacts are provided by residues 104 to 105 (NR), Asp126, 175 to 178 (WELH), 195 to 196 (EC), and Asn224. Residues Tyr253, Arg272, 284–287 (YPNH), and Tyr366 each bind substrate. NAD(+) is bound at residue Tyr284.

This sequence belongs to the Gfo/Idh/MocA family. Glycosyl hydrolase 109 subfamily. NAD(+) serves as cofactor. In terms of processing, predicted to be exported by the Tat system. The position of the signal peptide cleavage has not been experimentally proven.

In terms of biological role, glycosidase. This is Glycosyl hydrolase family 109 protein from Streptomyces filamentosus (Streptomyces roseosporus).